The chain runs to 194 residues: Histone H1.0 (194 aa).

Methionine 1 carries the N-acetylmethionine modification. Low complexity predominate over residues methionine 1 to alanine 11. The interval methionine 1–serine 29 is disordered. Threonine 2 carries the post-translational modification N-acetylthreonine; in Histone H1.0, N-terminally processed. The H15 domain occupies aspartate 24–lysine 97. Arginine 42 carries the citrulline modification. Positions threonine 84 to lysine 194 are disordered. Serine 104 bears the ADP-ribosylserine mark. Over residues valine 105 to lysine 194 the composition is skewed to basic residues.

This sequence belongs to the histone H1/H5 family. ADP-ribosylated on Ser-104 in response to DNA damage.

It localises to the nucleus. Its subcellular location is the chromosome. Histones H1 are necessary for the condensation of nucleosome chains into higher-order structures. The histones H1.0 are found in cells that are in terminal stages of differentiation or that have low rates of cell division. The sequence is that of Histone H1.0 (H1-0) from Pongo abelii (Sumatran orangutan).